Here is a 211-residue protein sequence, read N- to C-terminus: Thiamine-phosphate synthase (211 aa).

4-amino-2-methyl-5-(diphosphooxymethyl)pyrimidine-binding positions include 37–41 (QYRDK) and Asn-69. The Mg(2+) site is built by Asp-70 and Asp-89. Residue Ser-108 coordinates 4-amino-2-methyl-5-(diphosphooxymethyl)pyrimidine. 135–137 (SPT) is a 2-[(2R,5Z)-2-carboxy-4-methylthiazol-5(2H)-ylidene]ethyl phosphate binding site. Lys-138 provides a ligand contact to 4-amino-2-methyl-5-(diphosphooxymethyl)pyrimidine. 2-[(2R,5Z)-2-carboxy-4-methylthiazol-5(2H)-ylidene]ethyl phosphate contacts are provided by residues Gly-165 and 185 to 186 (LS).

Belongs to the thiamine-phosphate synthase family. It depends on Mg(2+) as a cofactor.

The enzyme catalyses 2-[(2R,5Z)-2-carboxy-4-methylthiazol-5(2H)-ylidene]ethyl phosphate + 4-amino-2-methyl-5-(diphosphooxymethyl)pyrimidine + 2 H(+) = thiamine phosphate + CO2 + diphosphate. It carries out the reaction 2-(2-carboxy-4-methylthiazol-5-yl)ethyl phosphate + 4-amino-2-methyl-5-(diphosphooxymethyl)pyrimidine + 2 H(+) = thiamine phosphate + CO2 + diphosphate. The catalysed reaction is 4-methyl-5-(2-phosphooxyethyl)-thiazole + 4-amino-2-methyl-5-(diphosphooxymethyl)pyrimidine + H(+) = thiamine phosphate + diphosphate. Its pathway is cofactor biosynthesis; thiamine diphosphate biosynthesis; thiamine phosphate from 4-amino-2-methyl-5-diphosphomethylpyrimidine and 4-methyl-5-(2-phosphoethyl)-thiazole: step 1/1. In terms of biological role, condenses 4-methyl-5-(beta-hydroxyethyl)thiazole monophosphate (THZ-P) and 2-methyl-4-amino-5-hydroxymethyl pyrimidine pyrophosphate (HMP-PP) to form thiamine monophosphate (TMP). The chain is Thiamine-phosphate synthase from Thiobacillus denitrificans (strain ATCC 25259 / T1).